Consider the following 255-residue polypeptide: tRNA1(Val) (adenine(37)-N6)-methyltransferase (255 aa).

The protein belongs to the methyltransferase superfamily. tRNA (adenine-N(6)-)-methyltransferase family.

The protein localises to the cytoplasm. It catalyses the reaction adenosine(37) in tRNA1(Val) + S-adenosyl-L-methionine = N(6)-methyladenosine(37) in tRNA1(Val) + S-adenosyl-L-homocysteine + H(+). In terms of biological role, specifically methylates the adenine in position 37 of tRNA(1)(Val) (anticodon cmo5UAC). This chain is tRNA1(Val) (adenine(37)-N6)-methyltransferase, found in Porphyromonas gingivalis (strain ATCC BAA-308 / W83).